Here is a 165-residue protein sequence, read N- to C-terminus: UPF0303 protein Bcep18194_A4700 (165 aa).

Belongs to the UPF0303 family.

This chain is UPF0303 protein Bcep18194_A4700, found in Burkholderia lata (strain ATCC 17760 / DSM 23089 / LMG 22485 / NCIMB 9086 / R18194 / 383).